The chain runs to 239 residues: MNIEQFQSMLGERGISLSPRQLEQFEMYFETLVEWNEKMNLTAITEKEEVYLKHFFDSITAAFYYDFSNPLSICDVGAGAGFPSIPLKICFPHLKVTIVDSLQKRINFLNHLAQKLELSDVAFCHDRAETFGKKEHVRESYDIVMARAVARLSVLSELCLPLVKVGGTFIAMKGAAANEEIENGKYAVEVLGGQLEEVSTFQLPFEESERNILLIKKKRKTPKKYPRKPGTPNKLPIEK.

Residues glycine 77, phenylalanine 82, 128–129, and arginine 147 each bind S-adenosyl-L-methionine; that span reads AE. Positions 219–239 are disordered; sequence RKTPKKYPRKPGTPNKLPIEK.

The protein belongs to the methyltransferase superfamily. RNA methyltransferase RsmG family.

The protein localises to the cytoplasm. In terms of biological role, specifically methylates the N7 position of guanine in position 535 of 16S rRNA. This is Ribosomal RNA small subunit methyltransferase G from Bacillus cytotoxicus (strain DSM 22905 / CIP 110041 / 391-98 / NVH 391-98).